A 340-amino-acid polypeptide reads, in one-letter code: Arginase 1, mitochondrial (340 aa).

A mitochondrion-targeting transit peptide spans 1–24; it reads MGGVAAGTRWIHHVRRLSAAKVSA. Positions 159, 183, 185, and 187 each coordinate Mn(2+). Substrate is bound by residues 185 to 189 and 193 to 195; these read HPDIY and EGN. Residues aspartate 268 and aspartate 270 each contribute to the Mn(2+) site. Glutamate 311 provides a ligand contact to substrate.

This sequence belongs to the arginase family. Mn(2+) is required as a cofactor.

The protein resides in the mitochondrion. It carries out the reaction L-arginine + H2O = urea + L-ornithine. It functions in the pathway nitrogen metabolism; urea cycle; L-ornithine and urea from L-arginine: step 1/1. Catalyzes the hydrolysis of L-arginine to urea and L-ornithine. The latter can be utilized in the urea cycle or as a precursor for the synthesis of both polyamines and proline. The polypeptide is Arginase 1, mitochondrial (ARG1) (Oryza sativa subsp. japonica (Rice)).